A 151-amino-acid chain; its full sequence is S-protein homolog 27 (151 aa).

2 N-linked (GlcNAc...) asparagine glycosylation sites follow: Asn-91 and Asn-123.

Belongs to the plant self-incompatibility (S1) protein family.

Its subcellular location is the secreted. The polypeptide is S-protein homolog 27 (Arabidopsis thaliana (Mouse-ear cress)).